A 253-amino-acid chain; its full sequence is HTH-type transcriptional regulator YdeO (253 aa).

In terms of domain architecture, HTH araC/xylS-type spans 137–233 (GKVRNIVNMK…GNSPKRVSKE (97 aa)). 2 DNA-binding regions (H-T-H motif) span residues 154–175 (KDICDCLYISESLLKKKLKQEQ) and 200–223 (VNKIAEQCGYASTSYFIYAFRKHF).

Functionally, induces the expression of gadE and mdtEF. Could also regulate the expression of other genes involved in acid resistance. The polypeptide is HTH-type transcriptional regulator YdeO (ydeO) (Escherichia coli O6:H1 (strain CFT073 / ATCC 700928 / UPEC)).